The following is a 272-amino-acid chain: Glutamate racemase (272 aa).

Substrate contacts are provided by residues 10-11 (DS) and 42-43 (YG). Catalysis depends on C74, which acts as the Proton donor/acceptor. Substrate is bound at residue 75-76 (NT). C185 (proton donor/acceptor) is an active-site residue. 186–187 (TH) contacts substrate.

Belongs to the aspartate/glutamate racemases family.

It catalyses the reaction L-glutamate = D-glutamate. It functions in the pathway cell wall biogenesis; peptidoglycan biosynthesis. Its function is as follows. Provides the (R)-glutamate required for cell wall biosynthesis. This is Glutamate racemase from Bacillus pumilus (strain SAFR-032).